The sequence spans 194 residues: Holliday junction branch migration complex subunit RuvA (194 aa).

The segment at 1 to 64 (MIGRLRGILA…EDSVALYGFL (64 aa)) is domain I. A domain II region spans residues 65 to 140 (REGERRLFRD…RAADFSSGAP (76 aa)). The tract at residues 140–144 (PITGQ) is flexible linker. The tract at residues 145–194 (LGPDAVSEATVALQQLGYKPAEAARMARDAGAEGDEVATVIRKALQAALR) is domain III.

This sequence belongs to the RuvA family. As to quaternary structure, homotetramer. Forms an RuvA(8)-RuvB(12)-Holliday junction (HJ) complex. HJ DNA is sandwiched between 2 RuvA tetramers; dsDNA enters through RuvA and exits via RuvB. An RuvB hexamer assembles on each DNA strand where it exits the tetramer. Each RuvB hexamer is contacted by two RuvA subunits (via domain III) on 2 adjacent RuvB subunits; this complex drives branch migration. In the full resolvosome a probable DNA-RuvA(4)-RuvB(12)-RuvC(2) complex forms which resolves the HJ.

It localises to the cytoplasm. Its function is as follows. The RuvA-RuvB-RuvC complex processes Holliday junction (HJ) DNA during genetic recombination and DNA repair, while the RuvA-RuvB complex plays an important role in the rescue of blocked DNA replication forks via replication fork reversal (RFR). RuvA specifically binds to HJ cruciform DNA, conferring on it an open structure. The RuvB hexamer acts as an ATP-dependent pump, pulling dsDNA into and through the RuvAB complex. HJ branch migration allows RuvC to scan DNA until it finds its consensus sequence, where it cleaves and resolves the cruciform DNA. This chain is Holliday junction branch migration complex subunit RuvA, found in Xanthomonas euvesicatoria pv. vesicatoria (strain 85-10) (Xanthomonas campestris pv. vesicatoria).